We begin with the raw amino-acid sequence, 271 residues long: MTYRGTRKSPCCSPPPRCGPPLPSGPAGSALGPPSSGAEEEMTKEQVYLREFQPADQEFARRIFYEGIKERILSSAFRGLKYQPLLQSVYAVIIIMCFVVTKSLLVTCCMPLFLLGMRYYYSRKIILNHLECALRTDMSDIEQYYMKQPGSCFWVAVLEGKVVGIVAARGNEEDNVVELRRMSVDSNYRGKGIAKALGRKVLEFAMLNHYSSIVLGTTAVKIAAHKLYESLGFKHVGVVEHHIVPGMTHSLLERLFFQLRYHRYCLQLREE.

The tract at residues 1–38 (MTYRGTRKSPCCSPPPRCGPPLPSGPAGSALGPPSSGA) is disordered. Over residues 12-24 (CSPPPRCGPPLPS) the composition is skewed to pro residues. Over residues 25-37 (GPAGSALGPPSSG) the composition is skewed to low complexity. The chain crosses the membrane as a helical span at residues 89–109 (VYAVIIIMCFVVTKSLLVTCC). The region spanning 115–258 (LGMRYYYSRK…HSLLERLFFQ (144 aa)) is the N-acetyltransferase domain.

This sequence belongs to the NAT8 family.

The protein resides in the cytoplasm. The protein localises to the microsome membrane. It is found in the mitochondrion membrane. Its subcellular location is the endoplasmic reticulum membrane. The catalysed reaction is L-aspartate + acetyl-CoA = N-acetyl-L-aspartate + CoA + H(+). In terms of biological role, catalyzes the synthesis of N-acetylaspartate acid (NAA) from L-aspartate and acetyl-CoA. The sequence is that of N-acetylaspartate synthetase (nat8l) from Xenopus tropicalis (Western clawed frog).